The primary structure comprises 602 residues: Translation factor GUF1 homolog, organellar chromatophore (602 aa).

The tr-type G domain occupies serine 7–valine 189. Residues alanine 16–serine 23, aspartate 82–histidine 86, and asparagine 136–aspartate 139 each bind GTP.

The protein belongs to the TRAFAC class translation factor GTPase superfamily. Classic translation factor GTPase family. LepA subfamily.

It is found in the plastid. The protein localises to the organellar chromatophore. It carries out the reaction GTP + H2O = GDP + phosphate + H(+). Its function is as follows. Promotes protein synthesis. May act as a fidelity factor of the translation reaction, by catalyzing a one-codon backward translocation of tRNAs on improperly translocated ribosomes. The chain is Translation factor GUF1 homolog, organellar chromatophore from Paulinella chromatophora.